A 334-amino-acid chain; its full sequence is MMLAVEDVLSELAGEERNERGLPPGFRFHPTDEELITFYLASKIFHGGLSGIHISEVDLNRCEPWELPEMAKMGEREWYFYSLRDRKYPTGLRTNRATTAGYWKATGKDKEVFSGGGGQLVGMKKTLVFYKGRAPRGLKTKWVMHEYRLENDHSHRHTCKEEWVICRVFNKTGDRKNVGLIHNQISYLHNHSLSTTHHHHHEALPLLIEPSNKTLTNFPSLLYDDPHQNYNNNNFLHGSSGHNIDELKALINPVVSQLNGIIFPSGNNNNDEDDFDFNLGVKTEQSSNGNEIDVRDYLENPLFQEASYGLLGFSSSPGPLHMLLDSPCPLGFQL.

The NAC domain maps to 22-171; it reads LPPGFRFHPT…EWVICRVFNK (150 aa). The DNA-binding element occupies 121–177; the sequence is VGMKKTLVFYKGRAPRGLKTKWVMHEYRLENDHSHRHTCKEEWVICRVFNKTGDRKN.

As to expression, in a general manner, present at the boundaries between mersitems and araising primordia.

The protein resides in the nucleus. In terms of biological role, transcription activator. Involved in molecular mechanisms regulating shoot apical meristem (SAM) formation during embryogenesis and organ separation. Required for axillary meristem initiation and separation of the meristem from the main stem. May act as an inhibitor of cell division. This is Protein CUP-SHAPED COTYLEDON 3 (NAC031) from Arabidopsis thaliana (Mouse-ear cress).